A 354-amino-acid polypeptide reads, in one-letter code: Methylthioribose-1-phosphate isomerase (354 aa).

Substrate-binding positions include 58–60 (RGA), Arg-101, and Gln-204. Catalysis depends on Asp-245, which acts as the Proton donor. Position 255 to 256 (255 to 256 (NK)) interacts with substrate.

Belongs to the eIF-2B alpha/beta/delta subunits family. MtnA subfamily.

The catalysed reaction is 5-(methylsulfanyl)-alpha-D-ribose 1-phosphate = 5-(methylsulfanyl)-D-ribulose 1-phosphate. It functions in the pathway amino-acid biosynthesis; L-methionine biosynthesis via salvage pathway; L-methionine from S-methyl-5-thio-alpha-D-ribose 1-phosphate: step 1/6. Catalyzes the interconversion of methylthioribose-1-phosphate (MTR-1-P) into methylthioribulose-1-phosphate (MTRu-1-P). This is Methylthioribose-1-phosphate isomerase from Xanthomonas oryzae pv. oryzae (strain MAFF 311018).